The sequence spans 149 residues: Large ribosomal subunit protein uL13 (149 aa).

The protein belongs to the universal ribosomal protein uL13 family. Part of the 50S ribosomal subunit.

Its function is as follows. This protein is one of the early assembly proteins of the 50S ribosomal subunit, although it is not seen to bind rRNA by itself. It is important during the early stages of 50S assembly. The polypeptide is Large ribosomal subunit protein uL13 (Chlorobium phaeovibrioides (strain DSM 265 / 1930) (Prosthecochloris vibrioformis (strain DSM 265))).